We begin with the raw amino-acid sequence, 642 residues long: Chaperone protein DnaK (642 aa).

Thr200 carries the post-translational modification Phosphothreonine; by autocatalysis. The segment covering 608-618 (QAESQAAGEGQ) has biased composition (low complexity). The tract at residues 608–642 (QAESQAAGEGQPDAGKKDDGNVVDAEFEEVKKDKQ) is disordered.

Belongs to the heat shock protein 70 family.

Functionally, acts as a chaperone. The protein is Chaperone protein DnaK of Laribacter hongkongensis (strain HLHK9).